The chain runs to 115 residues: NADH-ubiquinone oxidoreductase chain 3 (115 aa).

A run of 3 helical transmembrane segments spans residues Leu3–Trp23, Phe55–Leu75, and Thr86–Trp106.

It belongs to the complex I subunit 3 family. In terms of assembly, core subunit of respiratory chain NADH dehydrogenase (Complex I) which is composed of 45 different subunits. Interacts with TMEM186. Interacts with TMEM242.

It is found in the mitochondrion inner membrane. It catalyses the reaction a ubiquinone + NADH + 5 H(+)(in) = a ubiquinol + NAD(+) + 4 H(+)(out). Core subunit of the mitochondrial membrane respiratory chain NADH dehydrogenase (Complex I) which catalyzes electron transfer from NADH through the respiratory chain, using ubiquinone as an electron acceptor. Essential for the catalytic activity of complex I. This chain is NADH-ubiquinone oxidoreductase chain 3, found in Mus musculus (Mouse).